The chain runs to 166 residues: Lipoprotein signal peptidase (166 aa).

3 consecutive transmembrane segments (helical) span residues 12–32, 70–90, and 102–122; these read WLWL…LILQ, WFFA…MYRA, and ALII…GFVV. Active-site residues include aspartate 123 and aspartate 141. A helical transmembrane segment spans residues 142 to 162; the sequence is SAICFGAAMIVLEGFLPNAAA.

The protein belongs to the peptidase A8 family.

The protein localises to the cell inner membrane. The catalysed reaction is Release of signal peptides from bacterial membrane prolipoproteins. Hydrolyzes -Xaa-Yaa-Zaa-|-(S,diacylglyceryl)Cys-, in which Xaa is hydrophobic (preferably Leu), and Yaa (Ala or Ser) and Zaa (Gly or Ala) have small, neutral side chains.. The protein operates within protein modification; lipoprotein biosynthesis (signal peptide cleavage). Its function is as follows. This protein specifically catalyzes the removal of signal peptides from prolipoproteins. This is Lipoprotein signal peptidase from Enterobacter sp. (strain 638).